The primary structure comprises 242 residues: Zinc finger protein ZOP1 (242 aa).

The Matrin-type zinc-finger motif lies at 11 to 42 (KWCEFCKIWIQNNPTSIRNHDLGKRHRECVDK). Positions 42–71 (KKLTDMRERSAAKDKELKKNEKLLQQIEAK) form a coiled coil. The tract at residues 154–242 (VKKPVSSSGA…PLLGLYNRPF (89 aa)) is disordered. Residues 155–172 (KKPVSSSGAGPSVGKPPG) show a composition bias toward low complexity. Residues 201–233 (RQDEKPKKVSAEEKAALKAREAARKRVEDREKP) show a composition bias toward basic and acidic residues.

Component of a pre-mRNA splicing complex. Interacts with STA1. Interacts with PRP31.

The protein resides in the nucleus. Its subcellular location is the cajal body. In terms of biological role, nucleic acid-binding protein that promotes Pol IV-dependent small interfering RNA (siRNA) accumulation, DNA methylation and transcriptional silencing. May possess both RNA-directed DNA methylation (RdDM)-dependent and -independent roles in transcriptional silencing. Acts as a pre-mRNA splicing factor that associates with several typical components of the splicing machinery as well as with Pol II. The chain is Zinc finger protein ZOP1 from Arabidopsis thaliana (Mouse-ear cress).